The primary structure comprises 482 residues: MKFIIKLFPEITIKSQSVRLRFIKILTGNIRNVLKHYDETLAVVRHWDNIEVRAKDENQRLAIRDALTRIPGIHHILEVEDVPFTDMHDIFEKALAQYREQLEGKTFCVRVKRRGKHEFSSIEVERYVGGGLNQHIESARVKLTNPDVTVHLEVEDDRLLLIKGRYEGIGGFPIGTQEDVLSLISGGFDSGVSSYMLMRRGCRVHYCFFNLGGAAHEIGVRQVAHYLWNRFGSSHRVRFVAINFEPVVGEILEKVDDGQMGVVLKRMMVRAASKVAERYGVQALVTGEALGQVSSQTLTNLRLIDNVSDTLILRPLISYDKEHIINLARQIGTEDFARTMPEYCGVISKSPTVKAIKAKIEAEEENFDFSILDKVVEEANNVDIREIAQQTQQEVVEVETVSGFGPNDVILDIRSVDEQDDKPLKVEGVDVVSLPFYKLSTKFGDLDQSKTWLLWCERGVMSRLQALYLREQGFENVKAYRP.

The 105-residue stretch at 61–165 folds into the THUMP domain; that stretch reads LAIRDALTRI…DDRLLLIKGR (105 aa). ATP-binding positions include 183 to 184, Lys265, Gly287, and Gln296; that span reads LI. Residues Cys344 and Cys456 are joined by a disulfide bond. The Rhodanese domain maps to 404–482; that stretch reads FGPNDVILDI…GFENVKAYRP (79 aa). Catalysis depends on Cys456, which acts as the Cysteine persulfide intermediate.

The protein belongs to the ThiI family.

Its subcellular location is the cytoplasm. The catalysed reaction is [ThiI sulfur-carrier protein]-S-sulfanyl-L-cysteine + a uridine in tRNA + 2 reduced [2Fe-2S]-[ferredoxin] + ATP + H(+) = [ThiI sulfur-carrier protein]-L-cysteine + a 4-thiouridine in tRNA + 2 oxidized [2Fe-2S]-[ferredoxin] + AMP + diphosphate. It catalyses the reaction [ThiS sulfur-carrier protein]-C-terminal Gly-Gly-AMP + S-sulfanyl-L-cysteinyl-[cysteine desulfurase] + AH2 = [ThiS sulfur-carrier protein]-C-terminal-Gly-aminoethanethioate + L-cysteinyl-[cysteine desulfurase] + A + AMP + 2 H(+). Its pathway is cofactor biosynthesis; thiamine diphosphate biosynthesis. Its function is as follows. Catalyzes the ATP-dependent transfer of a sulfur to tRNA to produce 4-thiouridine in position 8 of tRNAs, which functions as a near-UV photosensor. Also catalyzes the transfer of sulfur to the sulfur carrier protein ThiS, forming ThiS-thiocarboxylate. This is a step in the synthesis of thiazole, in the thiamine biosynthesis pathway. The sulfur is donated as persulfide by IscS. This chain is tRNA sulfurtransferase, found in Salmonella gallinarum (strain 287/91 / NCTC 13346).